Reading from the N-terminus, the 768-residue chain is Solabiose phosphorylase (768 aa).

Aspartate 456 functions as the Proton donor in the catalytic mechanism.

It belongs to the glycosyl hydrolase 94 family.

The enzyme catalyses solabiose + phosphate = D-galactose + alpha-D-glucose 1-phosphate. Its function is as follows. Catalyzes the reversible phosphorolysis of solabiose. Catalyzes the phosphorolysis and synthesis of solabiose through a sequential bi-bi mechanism involving the formation of a ternary complex. Is probably involved in the metabolism of solabiose released from solabiose-containing compounds. This chain is Solabiose phosphorylase, found in Paenibacillus borealis.